We begin with the raw amino-acid sequence, 163 residues long: Calcium-binding protein I (163 aa).

EF-hand domains lie at Asp-20–Asn-42, Lys-82–Gly-117, and Asn-118–Asp-153. The Ca(2+) site is built by Asp-95, Asn-97, Asp-99, Met-101, Glu-106, Asp-131, Asn-133, Glu-135, Ser-137, and Asp-142.

This chain is Calcium-binding protein I (cbpI), found in Dictyostelium discoideum (Social amoeba).